The primary structure comprises 447 residues: uncharacterized protein (447 aa).

The segment at 392–435 is disordered; that stretch reads RFTKPSSSVAKSTSPSLRNSGSDESDLNQSDSDKEDERVVPVPK. Over residues 395–407 the composition is skewed to low complexity; it reads KPSSSVAKSTSPS. The span at 408–421 shows a compositional bias: polar residues; that stretch reads LRNSGSDESDLNQS.

This is an uncharacterized protein from Invertebrate iridescent virus 3 (IIV-3).